Reading from the N-terminus, the 183-residue chain is Caltractin ICL1c (183 aa).

Residues 1 to 30 (MARRGQQPPPQQQQAPPTQKNQAGKFNPAE) form a disordered region. EF-hand domains are found at residues 39–74 (EEVL…LGFE), 75–110 (AKNQ…RISE), 112–147 (DSKA…LGET), and 148–183 (MDDS…KTFA). Ca(2+)-binding residues include Asp52, Asp54, Thr56, Ser58, Glu63, Asp88, Asp90, Ser92, Gln94, and Glu99.

It belongs to the centrin family. Monomer.

The protein resides in the cytoplasm. Its subcellular location is the cytoskeleton. Its function is as follows. Plays a fundamental role in microtubule organizing center structure and function. Component of the infraciliary lattice (ICL) and the ciliary basal bodies. The polypeptide is Caltractin ICL1c (Icl1c) (Paramecium tetraurelia).